Here is a 495-residue protein sequence, read N- to C-terminus: UDP-N-acetylmuramoyl-L-alanyl-D-glutamate--2,6-diaminopimelate ligase (495 aa).

Residues Leu-27, Ser-29, and 44-46 contribute to the UDP-N-acetyl-alpha-D-muramoyl-L-alanyl-D-glutamate site; that span reads HQA. 116-122 serves as a coordination point for ATP; it reads GTNGKTT. UDP-N-acetyl-alpha-D-muramoyl-L-alanyl-D-glutamate is bound by residues Asn-157, 158–159, Ser-185, Gln-191, and Arg-193; that span reads TT. The residue at position 225 (Lys-225) is an N6-carboxylysine. Meso-2,6-diaminopimelate is bound by residues Arg-390, 414-417, Gly-465, and Glu-469; that span reads DNPR. The Meso-diaminopimelate recognition motif signature appears at 414–417; it reads DNPR.

This sequence belongs to the MurCDEF family. MurE subfamily. It depends on Mg(2+) as a cofactor. Carboxylation is probably crucial for Mg(2+) binding and, consequently, for the gamma-phosphate positioning of ATP.

The protein localises to the cytoplasm. It catalyses the reaction UDP-N-acetyl-alpha-D-muramoyl-L-alanyl-D-glutamate + meso-2,6-diaminopimelate + ATP = UDP-N-acetyl-alpha-D-muramoyl-L-alanyl-gamma-D-glutamyl-meso-2,6-diaminopimelate + ADP + phosphate + H(+). Its pathway is cell wall biogenesis; peptidoglycan biosynthesis. Catalyzes the addition of meso-diaminopimelic acid to the nucleotide precursor UDP-N-acetylmuramoyl-L-alanyl-D-glutamate (UMAG) in the biosynthesis of bacterial cell-wall peptidoglycan. The polypeptide is UDP-N-acetylmuramoyl-L-alanyl-D-glutamate--2,6-diaminopimelate ligase (Escherichia coli O157:H7).